A 365-amino-acid polypeptide reads, in one-letter code: Magnesium-chelatase subunit ChlI homolog (365 aa).

40-47 is an ATP binding site; it reads EKGTAKST. The interval 340–365 is disordered; the sequence is FKQQNNKDNEEKEEHKDDDVKKNMMK. Over residues 344–365 the composition is skewed to basic and acidic residues; sequence NNKDNEEKEEHKDDDVKKNMMK.

The protein belongs to the Mg-chelatase subunits D/I family.

This is Magnesium-chelatase subunit ChlI homolog from Methanocaldococcus jannaschii (strain ATCC 43067 / DSM 2661 / JAL-1 / JCM 10045 / NBRC 100440) (Methanococcus jannaschii).